Consider the following 146-residue polypeptide: Large ribosomal subunit protein bL9 (146 aa).

It belongs to the bacterial ribosomal protein bL9 family.

In terms of biological role, binds to the 23S rRNA. The sequence is that of Large ribosomal subunit protein bL9 from Nautilia profundicola (strain ATCC BAA-1463 / DSM 18972 / AmH).